Consider the following 205-residue polypeptide: Holliday junction branch migration complex subunit RuvA (205 aa).

Positions 1 to 62 (MFEYVTGYVE…EDIMALYGFK (62 aa)) are domain I. The interval 63–141 (TREERLLFTK…DVVPDAFVDL (79 aa)) is domain II. Residues 142–152 (FSDTERFDEKK) are flexible linker. A domain III region spans residues 153–205 (GSSAELDEALEALRALGYAEREVSRVVPELLKESLTTDQYIKKALSLLLNGKR).

It belongs to the RuvA family. As to quaternary structure, homotetramer. Forms an RuvA(8)-RuvB(12)-Holliday junction (HJ) complex. HJ DNA is sandwiched between 2 RuvA tetramers; dsDNA enters through RuvA and exits via RuvB. An RuvB hexamer assembles on each DNA strand where it exits the tetramer. Each RuvB hexamer is contacted by two RuvA subunits (via domain III) on 2 adjacent RuvB subunits; this complex drives branch migration. In the full resolvosome a probable DNA-RuvA(4)-RuvB(12)-RuvC(2) complex forms which resolves the HJ.

Its subcellular location is the cytoplasm. The RuvA-RuvB-RuvC complex processes Holliday junction (HJ) DNA during genetic recombination and DNA repair, while the RuvA-RuvB complex plays an important role in the rescue of blocked DNA replication forks via replication fork reversal (RFR). RuvA specifically binds to HJ cruciform DNA, conferring on it an open structure. The RuvB hexamer acts as an ATP-dependent pump, pulling dsDNA into and through the RuvAB complex. HJ branch migration allows RuvC to scan DNA until it finds its consensus sequence, where it cleaves and resolves the cruciform DNA. This Bacillus cereus (strain ATCC 14579 / DSM 31 / CCUG 7414 / JCM 2152 / NBRC 15305 / NCIMB 9373 / NCTC 2599 / NRRL B-3711) protein is Holliday junction branch migration complex subunit RuvA.